Reading from the N-terminus, the 356-residue chain is Caspase activity and apoptosis inhibitor 1 (356 aa).

Basic residues predominate over residues Met-1–Arg-14. 2 disordered regions span residues Met-1 to Ala-24 and Val-54 to Gln-80. Ser-68 carries the post-translational modification Phosphoserine. Thr-69 carries the post-translational modification Phosphothreonine. Residue Lys-84 forms a Glycyl lysine isopeptide (Lys-Gly) (interchain with G-Cter in SUMO2) linkage. Residues Ser-100 and Ser-183 each carry the phosphoserine modification. Residues Asp-208 to Val-234 are disordered. Basic and acidic residues predominate over residues Arg-214–Asp-231. Positions Glu-276 to Ser-306 form a coiled coil. Residue Ser-307 is modified to Phosphoserine.

In terms of biological role, anti-apoptotic protein that modulates a caspase-10 dependent mitochondrial caspase-3/9 feedback amplification loop. In Mus musculus (Mouse), this protein is Caspase activity and apoptosis inhibitor 1 (Caap1).